Consider the following 58-residue polypeptide: T-cell receptor gamma alternate reading frame protein (58 aa).

Detected at low levels in the ductal cells of the salivary gland but not in the acinar cells (at protein level). Expressed in endometrium (at protein level). Expressed in epithelial cells within the acinar ducts of the prostate.

This Homo sapiens (Human) protein is T-cell receptor gamma alternate reading frame protein.